Consider the following 597-residue polypeptide: Aspartate--tRNA(Asp/Asn) ligase (597 aa).

Glu-175 serves as a coordination point for L-aspartate. Residues 199-202 form an aspartate region; it reads QQYK. Residues Arg-221 and His-456 each coordinate L-aspartate. 221-223 is a binding site for ATP; it reads RDE. Glu-490 contributes to the ATP binding site. An L-aspartate-binding site is contributed by Arg-497. Residue 542 to 545 participates in ATP binding; it reads GVDR.

It belongs to the class-II aminoacyl-tRNA synthetase family. Type 1 subfamily. As to quaternary structure, homodimer.

Its subcellular location is the cytoplasm. The catalysed reaction is tRNA(Asx) + L-aspartate + ATP = L-aspartyl-tRNA(Asx) + AMP + diphosphate. Functionally, aspartyl-tRNA synthetase with relaxed tRNA specificity since it is able to aspartylate not only its cognate tRNA(Asp) but also tRNA(Asn). Reaction proceeds in two steps: L-aspartate is first activated by ATP to form Asp-AMP and then transferred to the acceptor end of tRNA(Asp/Asn). The chain is Aspartate--tRNA(Asp/Asn) ligase from Beijerinckia indica subsp. indica (strain ATCC 9039 / DSM 1715 / NCIMB 8712).